Reading from the N-terminus, the 660-residue chain is Bifunctional polymyxin resistance protein ArnA (660 aa).

Residues 1–304 are formyltransferase ArnAFT; the sequence is MKAVIFAYHD…TLGLVAGACL (304 aa). Residue His-104 is the Proton donor; for formyltransferase activity of the active site. (6R)-10-formyltetrahydrofolate contacts are provided by residues Arg-114 and 136 to 140; that span reads VKRAD. Positions 314-660 are dehydrogenase ArnADH; the sequence is RRIRVLILGV…RSVDIAERAS (347 aa). Residues Asp-347 and 368 to 369 contribute to the NAD(+) site; that span reads DI. Residues Ala-393, Tyr-398, and 432–433 each bind UDP-alpha-D-glucuronate; that span reads TS. Glu-434 serves as the catalytic Proton acceptor; for decarboxylase activity. UDP-alpha-D-glucuronate is bound by residues Arg-460, Asn-492, 526-535, and Tyr-613; that span reads KLIDGGQQKR. Residue Arg-619 is the Proton donor; for decarboxylase activity of the active site.

This sequence in the N-terminal section; belongs to the Fmt family. UDP-L-Ara4N formyltransferase subfamily. It in the C-terminal section; belongs to the NAD(P)-dependent epimerase/dehydratase family. UDP-glucuronic acid decarboxylase subfamily. Homohexamer, formed by a dimer of trimers.

It carries out the reaction UDP-alpha-D-glucuronate + NAD(+) = UDP-beta-L-threo-pentopyranos-4-ulose + CO2 + NADH. The enzyme catalyses UDP-4-amino-4-deoxy-beta-L-arabinose + (6R)-10-formyltetrahydrofolate = UDP-4-deoxy-4-formamido-beta-L-arabinose + (6S)-5,6,7,8-tetrahydrofolate + H(+). It functions in the pathway nucleotide-sugar biosynthesis; UDP-4-deoxy-4-formamido-beta-L-arabinose biosynthesis; UDP-4-deoxy-4-formamido-beta-L-arabinose from UDP-alpha-D-glucuronate: step 1/3. Its pathway is nucleotide-sugar biosynthesis; UDP-4-deoxy-4-formamido-beta-L-arabinose biosynthesis; UDP-4-deoxy-4-formamido-beta-L-arabinose from UDP-alpha-D-glucuronate: step 3/3. It participates in bacterial outer membrane biogenesis; lipopolysaccharide biosynthesis. Bifunctional enzyme that catalyzes the oxidative decarboxylation of UDP-glucuronic acid (UDP-GlcUA) to UDP-4-keto-arabinose (UDP-Ara4O) and the addition of a formyl group to UDP-4-amino-4-deoxy-L-arabinose (UDP-L-Ara4N) to form UDP-L-4-formamido-arabinose (UDP-L-Ara4FN). The modified arabinose is attached to lipid A and is required for resistance to polymyxin and cationic antimicrobial peptides. In Salmonella paratyphi A (strain ATCC 9150 / SARB42), this protein is Bifunctional polymyxin resistance protein ArnA.